Here is a 174-residue protein sequence, read N- to C-terminus: NADH-quinone oxidoreductase subunit B 2 (174 aa).

C51, C52, C116, and C145 together coordinate [4Fe-4S] cluster.

This sequence belongs to the complex I 20 kDa subunit family. In terms of assembly, NDH-1 is composed of 14 different subunits. Subunits NuoB, C, D, E, F, and G constitute the peripheral sector of the complex. [4Fe-4S] cluster is required as a cofactor.

It localises to the cell inner membrane. It carries out the reaction a quinone + NADH + 5 H(+)(in) = a quinol + NAD(+) + 4 H(+)(out). Its function is as follows. NDH-1 shuttles electrons from NADH, via FMN and iron-sulfur (Fe-S) centers, to quinones in the respiratory chain. The immediate electron acceptor for the enzyme in this species is believed to be ubiquinone. Couples the redox reaction to proton translocation (for every two electrons transferred, four hydrogen ions are translocated across the cytoplasmic membrane), and thus conserves the redox energy in a proton gradient. This chain is NADH-quinone oxidoreductase subunit B 2, found in Thermodesulfovibrio yellowstonii (strain ATCC 51303 / DSM 11347 / YP87).